Reading from the N-terminus, the 185-residue chain is Ribosome-recycling factor (185 aa).

This sequence belongs to the RRF family.

It is found in the cytoplasm. Functionally, responsible for the release of ribosomes from messenger RNA at the termination of protein biosynthesis. May increase the efficiency of translation by recycling ribosomes from one round of translation to another. This Pseudomonas fluorescens (strain ATCC BAA-477 / NRRL B-23932 / Pf-5) protein is Ribosome-recycling factor.